The sequence spans 484 residues: Cysteine--tRNA ligase (484 aa).

Cys29 contacts Zn(2+). The 'HIGH' region motif lies at 31 to 41; that stretch reads PTVQSAPHIGH. The Zn(2+) site is built by Cys219, His244, and Glu248. The short motif at 275 to 279 is the 'KMSKS' region element; the sequence is KMSKS. Lys278 is a binding site for ATP.

This sequence belongs to the class-I aminoacyl-tRNA synthetase family. As to quaternary structure, monomer. The cofactor is Zn(2+).

It is found in the cytoplasm. It catalyses the reaction tRNA(Cys) + L-cysteine + ATP = L-cysteinyl-tRNA(Cys) + AMP + diphosphate. This chain is Cysteine--tRNA ligase, found in Clavibacter sepedonicus (Clavibacter michiganensis subsp. sepedonicus).